A 318-amino-acid chain; its full sequence is 2-keto-3-deoxygluconate permease (318 aa).

Transmembrane regions (helical) follow at residues 10-30, 42-62, 82-102, 109-129, 139-159, 163-183, 201-221, 224-244, 257-277, and 288-308; these read LPGG…TLWP, GLIS…GATI, IAVA…GGIP, LSVL…YAAL, AGAV…LILG, LATF…LGFA, TLVP…TIVH, ASGV…LLLA, VAAS…AGMA, and TALV…LTAL.

Belongs to the KdgT transporter family.

It localises to the cell inner membrane. It carries out the reaction 2-dehydro-3-deoxy-D-gluconate(in) + H(+)(in) = 2-dehydro-3-deoxy-D-gluconate(out) + H(+)(out). Its function is as follows. Catalyzes the proton-dependent uptake of 2-keto-3-deoxygluconate (KDG) into the cell. This chain is 2-keto-3-deoxygluconate permease, found in Xanthomonas oryzae pv. oryzae (strain MAFF 311018).